The chain runs to 317 residues: Succinate receptor 1 (317 aa).

Residues 1–23 lie on the Extracellular side of the membrane; sequence MAQNLSCENWLATEAILNKYYLS. Asparagine 4 carries an N-linked (GlcNAc...) asparagine glycan. Residues 24–47 form a helical membrane-spanning segment; that stretch reads AFYAIEFIFGLLGNVTVVFGYLFC. Topologically, residues 48 to 55 are cytoplasmic; the sequence is MKNWNSSN. Residues 56–76 form a helical membrane-spanning segment; that stretch reads VYLFNLSISDFAFLCTLPILI. Residues 77–101 lie on the Extracellular side of the membrane; the sequence is KSYANDKGTYGDVLCISNRYVLHTN. Cysteines 91 and 168 form a disulfide. Residues 102 to 119 traverse the membrane as a helical segment; sequence LYTSILFLTFISMDRYLL. Residues 120-133 are Cytoplasmic-facing; the sequence is MKYPFREHFLQKKE. The helical transmembrane segment at 134 to 157 threads the bilayer; that stretch reads FAILISLAVWALVTLEVLPMLTFI. The Extracellular segment spans residues 158–180; that stretch reads NSVPKEEGSNCIDYASSGNPEHN. Residues 181 to 204 form a helical membrane-spanning segment; the sequence is LIYSLCLTLLGFLIPLSVMCFFYY. Topologically, residues 205–228 are cytoplasmic; that stretch reads KMVVFLKRRSQQQATALPLDKPQR. Residues 229–246 form a helical membrane-spanning segment; it reads LVVLAVVIFSILFTPYHI. Topologically, residues 247–277 are extracellular; it reads MRNLRIASRLDSWPQGCTQKAIKSIYTLTRP. A helical transmembrane segment spans residues 278 to 294; that stretch reads LAFLNSAINPIFYFLMG. The Cytoplasmic segment spans residues 295–317; sequence DHYREMLISKFRQYFKSLTSFRT.

It belongs to the G-protein coupled receptor 1 family. In terms of tissue distribution, predominantly expressed in the kidney (proximal and distal tubules and the juxtaglomerular apparatus). Weakly expressed in liver, spleen and small intestine. Highly expressed in immature dendritic cells, expression rapidly downregulates after maturation. Also expressed in macrophages. Specifically expressed in intestinal tuft cells. Expression in whole muscle is attributable to major non-myofibrillar resident cell types, including stromal, endothelial and satellite cell populations.

The protein resides in the cell membrane. Functionally, g protein-coupled receptor for succinate able to mediate signaling through Gq/GNAQ or Gi/GNAI second messengers depending on the cell type and the processes regulated. Succinate-SUCNR1 signaling serves as a link between metabolic stress, inflammation and energy homeostasis. In macrophages, plays a range of immune-regulatory roles. During inflammation, succinate-SUCNR1 signaling may act as an anti-inflammatory mediator or boost inflammation depending on the inflammatory status of cells. Hyperpolarizes M2 macrophages versus M1 phenotype through Gq signaling by regulating the transcription of genes involved in immune function. In activated M1 macrophages, plays a pro-inflammatory role in response to LPS. Expressed in dendritic cells, where it is involved in the sensing of immunological danger and enhances immunity. Mediates succinate triggered intracelleular calcium mobilization, induces migratory responses and acts in synergy with Toll-like receptor ligands for the production of proinflammatory cytokines as well as an enhancement of antigen-specific activation of helper T cells. In the small intestine, mediates the activation of tuft cells by dietary succinate and triggers type 2 immunity. In adipocytes, plays an important role in the control of energy metabolism. In response to succinate, controls leptin expression in an AMPK-JNK-CEBPA-dependent as well as circadian clock-regulated manner. In muscle tissue, is expressed in non-muscle cells and coordinates muscle remodeling in response to the succinate produced during exercise training in a paracrine manner. In retina, acts as a mediator of vessel growth during retinal development. In response to succinate, regulates the production of angiogenic factors, including VEGF, by retinal ganglion neurons. In Mus musculus (Mouse), this protein is Succinate receptor 1 (Sucnr1).